Reading from the N-terminus, the 278-residue chain is F-box only protein 17 (278 aa).

Positions 15-62 (SLALDALPPELLVQVLSHVPPRSLVTRCRPVCRAWRDIVDGPTVWLLQ) constitute an F-box domain. The FBA domain maps to 99–275 (YCLRAPFGRN…VTHSSVRVRI (177 aa)).

As to quaternary structure, part of a SCF (SKP1-cullin-F-box) protein ligase complex. Interacts with SKP1 and CUL1. In terms of tissue distribution, expressed in heart, skeletal muscle, liver and kidney. Expressed at lower levels in spleen and brain.

Substrate-recognition component of the SCF (SKP1-CUL1-F-box protein)-type E3 ubiquitin ligase complex. Able to recognize and bind denatured glycoproteins, which are modified with complex-type oligosaccharides. Also recognizes sulfated glycans. Does not bind high-mannose glycoproteins. The sequence is that of F-box only protein 17 (FBXO17) from Homo sapiens (Human).